A 179-amino-acid chain; its full sequence is Large ribosomal subunit protein uL6 (179 aa).

The protein belongs to the universal ribosomal protein uL6 family. In terms of assembly, part of the 50S ribosomal subunit.

Its function is as follows. This protein binds to the 23S rRNA, and is important in its secondary structure. It is located near the subunit interface in the base of the L7/L12 stalk, and near the tRNA binding site of the peptidyltransferase center. The polypeptide is Large ribosomal subunit protein uL6 (Chlorobaculum tepidum (strain ATCC 49652 / DSM 12025 / NBRC 103806 / TLS) (Chlorobium tepidum)).